A 315-amino-acid polypeptide reads, in one-letter code: Homoserine kinase (315 aa).

96–106 (PHSRGLGSSAA) lines the ATP pocket.

This sequence belongs to the GHMP kinase family. Homoserine kinase subfamily.

Its subcellular location is the cytoplasm. The enzyme catalyses L-homoserine + ATP = O-phospho-L-homoserine + ADP + H(+). The protein operates within amino-acid biosynthesis; L-threonine biosynthesis; L-threonine from L-aspartate: step 4/5. Catalyzes the ATP-dependent phosphorylation of L-homoserine to L-homoserine phosphate. The protein is Homoserine kinase of Mycobacterium leprae (strain Br4923).